We begin with the raw amino-acid sequence, 112 residues long: Integration host factor subunit alpha (112 aa).

This sequence belongs to the bacterial histone-like protein family. Heterodimer of an alpha and a beta chain.

Its function is as follows. This protein is one of the two subunits of integration host factor, a specific DNA-binding protein that functions in genetic recombination as well as in transcriptional and translational control. The protein is Integration host factor subunit alpha of Sinorhizobium medicae (strain WSM419) (Ensifer medicae).